Reading from the N-terminus, the 127-residue chain is Large ribosomal subunit protein bL17 (127 aa).

It belongs to the bacterial ribosomal protein bL17 family. Part of the 50S ribosomal subunit. Contacts protein L32.

This Leuconostoc mesenteroides subsp. mesenteroides (strain ATCC 8293 / DSM 20343 / BCRC 11652 / CCM 1803 / JCM 6124 / NCDO 523 / NBRC 100496 / NCIMB 8023 / NCTC 12954 / NRRL B-1118 / 37Y) protein is Large ribosomal subunit protein bL17.